The sequence spans 106 residues: uncharacterized protein (106 aa).

Transmembrane regions (helical) follow at residues 17–37 and 55–75; these read AGLL…AVLV and FSSS…FMIF.

It localises to the membrane. This is an uncharacterized protein from Saccharomyces cerevisiae (strain ATCC 204508 / S288c) (Baker's yeast).